Here is a 367-residue protein sequence, read N- to C-terminus: Centromere protein L (367 aa).

Belongs to the CENP-L/IML3 family.

The protein resides in the nucleus. Its subcellular location is the chromosome. It is found in the centromere. Functionally, probable component of a centromeric complex involved in assembly of kinetochore proteins, mitotic progression and chromosome segregation. The polypeptide is Centromere protein L (cenpl) (Danio rerio (Zebrafish)).